We begin with the raw amino-acid sequence, 482 residues long: Zinc finger protein 385B (482 aa).

Positions 1–105 are required for induction of apoptosis; the sequence is MNMATFLRGF…TGSACHTTTL (105 aa). 2 consecutive Matrin-type zinc fingers follow at residues 34-64 and 169-199; these read SFCE…RVKQ and ISCN…KVKA. Disordered regions lie at residues 54–75, 189–259, and 268–287; these read DGKS…PPVQ, KGSK…SFLL, and LGAI…SVAE. The segment at 106 to 482 is interaction with p53/TP53; the sequence is PALVRTPTLM…TPASILFAPY (377 aa). Basic and acidic residues predominate over residues 231–240; it reads SSDKSEDKGK. The Matrin-type 3 zinc finger occupies 294 to 328; that stretch reads KKLLYCSLCKVAVNSLSQLEAHNTGSKHKTMVEAR. Disordered regions lie at residues 331–352 and 378–397; these read AGPI…GSKG and HISS…KPKY. A Matrin-type 4 zinc finger spans residues 360–390; the sequence is FHCEICDVHVNSEIQLKQHISSRRHKDRVAG.

As to quaternary structure, interacts with p53/TP53; the interaction is direct.

It localises to the nucleus. Its function is as follows. May play a role in p53/TP53-mediated apoptosis. The chain is Zinc finger protein 385B (Znf385b) from Mus musculus (Mouse).